The sequence spans 624 residues: PTS system mannitol-specific EIICBA component (624 aa).

The region spanning 13-336 (FGRFLSNMVM…SFVIASFFLK (324 aa)) is the PTS EIIC type-2 domain. Transmembrane regions (helical) follow at residues 25-46 (IGAF…WLPN), 51-71 (KLVG…SGGK), 135-156 (SSGI…PAVK), 166-186 (VDIL…EPAK), 274-293 (VIAG…AGLV), and 314-335 (VGVL…SFFL). A PTS EIIB type-2 domain is found at 372 to 463 (QKIFVACDAG…LVQDLSNTKV (92 aa)). Residue Cys-378 is the Phosphocysteine intermediate; for EIIB activity of the active site. Position 378 is a phosphocysteine; by EIIA (Cys-378). A PTS EIIA type-2 domain is found at 482–624 (FVLTEKQVFL…VEKVLALLKA (143 aa)). Residue His-542 is the Tele-phosphohistidine intermediate; for EIIA activity of the active site. Position 542 is a phosphohistidine; by HPr (His-542).

As to quaternary structure, homodimer. Post-translationally, an intramolecular phosphotransfer takes places between His-542 and Cys-378.

It is found in the cell inner membrane. The enzyme catalyses D-mannitol(out) + N(pros)-phospho-L-histidyl-[protein] = D-mannitol 1-phosphate(in) + L-histidyl-[protein]. In terms of biological role, the phosphoenolpyruvate-dependent sugar phosphotransferase system (sugar PTS), a major carbohydrate active transport system, catalyzes the phosphorylation of incoming sugar substrates concomitantly with their translocation across the cell membrane. This system is involved in D-mannitol transport. The protein is PTS system mannitol-specific EIICBA component (mtlA) of Pasteurella multocida (strain Pm70).